Here is a 447-residue protein sequence, read N- to C-terminus: NADH-ubiquinone oxidoreductase chain 4 (447 aa).

13 helical membrane passes run 4 to 24 (LLLL…FMLF), 34 to 54 (LIIG…LNWI), 67 to 87 (MYSY…FISL), 100 to 120 (LLMI…FYLF), 149 to 169 (MFYT…IYLI), 189 to 209 (LFIY…FHGW), 223 to 243 (MILA…LMII), 248 to 268 (FILI…ILSL), 279 to 299 (IIAI…MTFL), 304 to 324 (IGGY…FFLV), 349 to 371 (MSLL…NLIS), 388 to 408 (LILM…FMFI), and 422 to 442 (GILV…LMFL).

Belongs to the complex I subunit 4 family.

It is found in the mitochondrion membrane. The catalysed reaction is a ubiquinone + NADH + 5 H(+)(in) = a ubiquinol + NAD(+) + 4 H(+)(out). Functionally, core subunit of the mitochondrial membrane respiratory chain NADH dehydrogenase (Complex I) that is believed to belong to the minimal assembly required for catalysis. Complex I functions in the transfer of electrons from NADH to the respiratory chain. The immediate electron acceptor for the enzyme is believed to be ubiquinone. The sequence is that of NADH-ubiquinone oxidoreductase chain 4 (ND4) from Apis mellifera ligustica (Common honeybee).